The following is a 379-amino-acid chain: MAATAAAVVAEEDTELRDLLVQTLENSGVLNRIKAELRAAVFLALEEQEKVENKTPLVNESLKKFLNTKDGRLVASLVAEFLQFFNLDFTLAVFQPETSTLQGLEGRENLARDLGIIEAEGTVGGPLLLEVIRRCQQKEKGPTTGEGALDLSDVHPPPKSPEGKTSAQTTPSKKANNEANQSDTSVSLSEPKSKSSLHLLSHETKIGSFLSNKTLDGKDKAGLCPDEDDMEGDSFFDDPIPKPEKTYGLRSEPRKQPGSLASLSDAPPLKSGLSSLAGAPSLKDSESKRGNTVLKDLKLISGKIGSLGLGTGEDDDYVDDFNSTSHRSEKSEISIGEEIEEDLSVEIDDINTSDKLDDLTQDLTVSQLSDVADYLEDVA.

Residues 70 to 102 (DGRLVASLVAEFLQFFNLDFTLAVFQPETSTLQ) enclose the LisH domain. Residues 139 to 196 (EKGPTTGEGALDLSDVHPPPKSPEGKTSAQTTPSKKANNEANQSDTSVSLSEPKSKSS) form a disordered region. Position 143 is a phosphothreonine (T143). A phosphoserine mark is found at S152 and S160. Residues 163-184 (GKTSAQTTPSKKANNEANQSDT) are compositionally biased toward polar residues. The residue at position 170 (T170) is a Phosphothreonine. At S182 the chain carries Phosphoserine. Residues 185–196 (SVSLSEPKSKSS) show a composition bias toward low complexity. Residue T214 is modified to Phosphothreonine. A disordered region spans residues 216-288 (DGKDKAGLCP…APSLKDSESK (73 aa)). Over residues 225–236 (PDEDDMEGDSFF) the composition is skewed to acidic residues. Residues 239 to 255 (PIPKPEKTYGLRSEPRK) show a composition bias toward basic and acidic residues. Positions 266 to 282 (APPLKSGLSSLAGAPSL) are enriched in low complexity. Residues S281 and S306 each carry the phosphoserine modification. Position 317 is a phosphotyrosine (Y317).

Belongs to the CEP43 family. As to quaternary structure, homodimer. Part of a ternary complex that contains CEP350, CEP43 and MAPRE1. Interacts directly with CEP350 and MAPRE1. Interacts with CEP19. Interacts (via N-terminus) with CEP350 (via C-terminus).

The protein resides in the cytoplasm. It is found in the cytoskeleton. The protein localises to the microtubule organizing center. Its subcellular location is the centrosome. It localises to the centriole. The protein resides in the cilium basal body. In terms of biological role, required for anchoring microtubules to the centrosomes. Required for ciliation. The chain is Centrosomal protein 43 (CEP43) from Macaca fascicularis (Crab-eating macaque).